A 312-amino-acid polypeptide reads, in one-letter code: Ribonuclease Z (312 aa).

The Zn(2+) site is built by His62, His64, Asp66, His67, His144, Asp215, and His273. The active-site Proton acceptor is the Asp66.

The protein belongs to the RNase Z family. Homodimer. Zn(2+) is required as a cofactor.

The enzyme catalyses Endonucleolytic cleavage of RNA, removing extra 3' nucleotides from tRNA precursor, generating 3' termini of tRNAs. A 3'-hydroxy group is left at the tRNA terminus and a 5'-phosphoryl group is left at the trailer molecule.. In terms of biological role, zinc phosphodiesterase, which displays some tRNA 3'-processing endonuclease activity. Probably involved in tRNA maturation, by removing a 3'-trailer from precursor tRNA. The protein is Ribonuclease Z of Prochlorococcus marinus (strain AS9601).